Consider the following 527-residue polypeptide: Glutamate--cysteine ligase (527 aa).

It belongs to the glutamate--cysteine ligase type 1 family. Type 1 subfamily.

The enzyme catalyses L-cysteine + L-glutamate + ATP = gamma-L-glutamyl-L-cysteine + ADP + phosphate + H(+). The protein operates within sulfur metabolism; glutathione biosynthesis; glutathione from L-cysteine and L-glutamate: step 1/2. The protein is Glutamate--cysteine ligase of Pseudomonas paraeruginosa (strain DSM 24068 / PA7) (Pseudomonas aeruginosa (strain PA7)).